We begin with the raw amino-acid sequence, 608 residues long: Chaperone protein HtpG (608 aa).

Residues 1–332 form an a; substrate-binding region; the sequence is MQFQTEVNQL…VEDLPLNVSR (332 aa). A b region spans residues 333–536; sequence EILQENQILK…KNKPDFAMQQ (204 aa). Positions 537-608 are c; it reads LLKQMGQEQN…LTKIINKAFS (72 aa).

It belongs to the heat shock protein 90 family. As to quaternary structure, homodimer.

Its subcellular location is the cytoplasm. Molecular chaperone. Has ATPase activity. This chain is Chaperone protein HtpG, found in Campylobacter jejuni (strain RM1221).